The primary structure comprises 356 residues: Probable neutral protease 2 homolog ARB_04769 (356 aa).

The first 17 residues, 1 to 17 (MQFTALLAALGAPLALA), serve as a signal peptide directing secretion. Positions 18–183 (ASIPAAAHNH…DDSTGVIDKR (166 aa)) are excised as a propeptide. Disulfide bonds link cysteine 191–cysteine 262 and cysteine 269–cysteine 287. Asparagine 205 carries N-linked (GlcNAc...) asparagine glycosylation. Histidine 311 lines the Zn(2+) pocket. Glutamate 312 is an active-site residue. 2 residues coordinate Zn(2+): histidine 315 and aspartate 326.

Belongs to the peptidase M35 family. Requires Zn(2+) as cofactor.

The protein resides in the secreted. It catalyses the reaction Preferential cleavage of bonds with hydrophobic residues in P1'. Also 3-Asn-|-Gln-4 and 8-Gly-|-Ser-9 bonds in insulin B chain.. Functionally, probable secreted metalloprotease that shows high activities on basic nuclear substrates such as histone and protamine. May be involved in virulence. In Arthroderma benhamiae (strain ATCC MYA-4681 / CBS 112371) (Trichophyton mentagrophytes), this protein is Probable neutral protease 2 homolog ARB_04769.